The primary structure comprises 218 residues: Uracil-DNA glycosylase (218 aa).

Catalysis depends on Asp-59, which acts as the Proton acceptor.

It belongs to the uracil-DNA glycosylase (UDG) superfamily. UNG family.

The protein localises to the cytoplasm. The enzyme catalyses Hydrolyzes single-stranded DNA or mismatched double-stranded DNA and polynucleotides, releasing free uracil.. Functionally, excises uracil residues from the DNA which can arise as a result of misincorporation of dUMP residues by DNA polymerase or due to deamination of cytosine. This Staphylococcus saprophyticus subsp. saprophyticus (strain ATCC 15305 / DSM 20229 / NCIMB 8711 / NCTC 7292 / S-41) protein is Uracil-DNA glycosylase.